The chain runs to 434 residues: Nicotinate phosphoribosyltransferase (434 aa).

Histidine 242 carries the post-translational modification Phosphohistidine; by autocatalysis.

It belongs to the NAPRTase family. Transiently phosphorylated on a His residue during the reaction cycle. Phosphorylation strongly increases the affinity for substrates and increases the rate of nicotinate D-ribonucleotide production. Dephosphorylation regenerates the low-affinity form of the enzyme, leading to product release.

The enzyme catalyses nicotinate + 5-phospho-alpha-D-ribose 1-diphosphate + ATP + H2O = nicotinate beta-D-ribonucleotide + ADP + phosphate + diphosphate. It functions in the pathway cofactor biosynthesis; NAD(+) biosynthesis; nicotinate D-ribonucleotide from nicotinate: step 1/1. Functionally, catalyzes the synthesis of beta-nicotinate D-ribonucleotide from nicotinate and 5-phospho-D-ribose 1-phosphate at the expense of ATP. The chain is Nicotinate phosphoribosyltransferase from Brucella canis (strain ATCC 23365 / NCTC 10854 / RM-666).